The sequence spans 60 residues: DNA-directed RNA polymerase subunit Rpo6 (60 aa).

It belongs to the archaeal Rpo6/eukaryotic RPB6 RNA polymerase subunit family. As to quaternary structure, part of the RNA polymerase complex.

The protein resides in the cytoplasm. It carries out the reaction RNA(n) + a ribonucleoside 5'-triphosphate = RNA(n+1) + diphosphate. In terms of biological role, DNA-dependent RNA polymerase (RNAP) catalyzes the transcription of DNA into RNA using the four ribonucleoside triphosphates as substrates. The chain is DNA-directed RNA polymerase subunit Rpo6 from Methanothrix thermoacetophila (strain DSM 6194 / JCM 14653 / NBRC 101360 / PT) (Methanosaeta thermophila).